The chain runs to 485 residues: Membrane-bound lytic murein transglycosylase F (485 aa).

The first 29 residues, 1-29, serve as a signal peptide directing secretion; the sequence is MFAHTALRQRCAKWLFATGLFLLLGACVE. Positions 30-267 are non-LT domain; it reads KPSTLERVKE…RLKDRYYGHV (238 aa). The segment at 268-485 is LT domain; the sequence is DVLGYVGAYT…DKPAEQSPPM (218 aa). Glu-314 is an active-site residue. Positions 465–485 are disordered; that stretch reads EGNLHVPGVNKDKPAEQSPPM.

It in the N-terminal section; belongs to the bacterial solute-binding protein 3 family. The protein in the C-terminal section; belongs to the transglycosylase Slt family.

The protein resides in the cell outer membrane. It carries out the reaction Exolytic cleavage of the (1-&gt;4)-beta-glycosidic linkage between N-acetylmuramic acid (MurNAc) and N-acetylglucosamine (GlcNAc) residues in peptidoglycan, from either the reducing or the non-reducing ends of the peptidoglycan chains, with concomitant formation of a 1,6-anhydrobond in the MurNAc residue.. Functionally, murein-degrading enzyme that degrades murein glycan strands and insoluble, high-molecular weight murein sacculi, with the concomitant formation of a 1,6-anhydromuramoyl product. Lytic transglycosylases (LTs) play an integral role in the metabolism of the peptidoglycan (PG) sacculus. Their lytic action creates space within the PG sacculus to allow for its expansion as well as for the insertion of various structures such as secretion systems and flagella. The sequence is that of Membrane-bound lytic murein transglycosylase F from Pseudomonas putida (strain W619).